Consider the following 115-residue polypeptide: Aspartate 1-decarboxylase (115 aa).

Serine 24 serves as the catalytic Schiff-base intermediate with substrate; via pyruvic acid. Pyruvic acid (Ser) is present on serine 24. Threonine 56 provides a ligand contact to substrate. The active-site Proton donor is the tyrosine 57. 72-74 (GAA) provides a ligand contact to substrate.

Belongs to the PanD family. Heterooctamer of four alpha and four beta subunits. Pyruvate serves as cofactor. Is synthesized initially as an inactive proenzyme, which is activated by self-cleavage at a specific serine bond to produce a beta-subunit with a hydroxyl group at its C-terminus and an alpha-subunit with a pyruvoyl group at its N-terminus.

The protein resides in the cytoplasm. The catalysed reaction is L-aspartate + H(+) = beta-alanine + CO2. Its pathway is cofactor biosynthesis; (R)-pantothenate biosynthesis; beta-alanine from L-aspartate: step 1/1. Its function is as follows. Catalyzes the pyruvoyl-dependent decarboxylation of aspartate to produce beta-alanine. The chain is Aspartate 1-decarboxylase from Pseudothermotoga lettingae (strain ATCC BAA-301 / DSM 14385 / NBRC 107922 / TMO) (Thermotoga lettingae).